The primary structure comprises 732 residues: Small conductance calcium-activated potassium channel protein 3 (732 aa).

The span at 1-11 (MDTSGHFHDSG) shows a compositional bias: basic and acidic residues. Disordered regions lie at residues 1 to 82 (MDTS…QQAP) and 119 to 161 (AILH…QASP). The segment covering 35–61 (QPPPPPAPPAVPQQPPGPLLQPQPPQP) has biased composition (pro residues). Positions 62–82 (QQQQSQQQQQQQSQQQQQQAP) are enriched in low complexity. Polar residues predominate over residues 119–133 (AILHPSSRQGSQLNL). A compositionally biased stretch (low complexity) spans 139–148 (GHSPSSTATS). The residue at position 168 (S168) is a Phosphoserine. A compositionally biased stretch (polar residues) spans 241-257 (THNHQHAGTTAGSTTFP). The tract at residues 241–260 (THNHQHAGTTAGSTTFPKAN) is disordered. The helical transmembrane segment at 289–309 (LIFGMFGIVVMVIETELSWGL) threads the bilayer. Residues 316 to 336 (FSLALKCLISLSTVILLGLII) traverse the membrane as a helical segment. Residues 367 to 387 (ISLEMLVCAIHPIPGEYKFFW) traverse the membrane as a helical segment. Residues 406–426 (IILSIPMFLRLYLIARVMLLH) form a helical membrane-spanning segment. Residues 455–475 (LMTICPGTVLLVFSISLWIIA) form a helical membrane-spanning segment. An intramembrane region (pore-forming) is located at residues 495–515 (FLGAMWLISITFLSIGYGDMV). A helical transmembrane segment spans residues 524-544 (VCLLTGIMGAGCTALVVAVVA). A calmodulin-binding region spans residues 562-638 (DTQLTKRIKN…LVDLSKMQNV (77 aa)). Positions 643–670 (ITELNDRSEDLEKQIGSLESKLEHLTAS) form a coiled coil. A disordered region spans residues 704-732 (GTSHAPPSDSPIGISSTSFPTPYTSSSSC). Low complexity predominate over residues 718–732 (SSTSFPTPYTSSSSC).

It belongs to the potassium channel KCNN family. KCa2.3/KCNN3 subfamily. Homodimer. Heteromultimer with KCNN2 or KCNN1; this modulates plasma membrane expression and consequently the small conductance calcium-activated potassium channel activity. The complex is composed of 4 channel subunits each of which binds to a calmodulin subunit which regulates the channel activity through calcium-binding. Interacts with CALM1. Expressed at low levels in atrial and ventricular myocytes (at protein level).

Its subcellular location is the cell membrane. It is found in the cytoplasm. It localises to the myofibril. The protein localises to the sarcomere. The protein resides in the z line. The enzyme catalyses K(+)(in) = K(+)(out). With respect to regulation, inhibited by bee venom neurotoxin apamin. In terms of biological role, small conductance calcium-activated potassium channel that mediates the voltage-independent transmembrane transfer of potassium across the cell membrane through a constitutive interaction with calmodulin which binds the intracellular calcium allowing its opening. The current is characterized by a voltage-independent activation, an intracellular calcium concentration increase-dependent activation and a single-channel conductance of 10 picosiemens. Also presents an inwardly rectifying current, thus reducing its already small outward conductance of potassium ions, which is particularly the case when the membrane potential displays positive values, above + 20 mV. Activation is followed by membrane hyperpolarization. Thought to regulate neuronal excitability by contributing to the slow component of synaptic afterhyperpolarization. This chain is Small conductance calcium-activated potassium channel protein 3, found in Mus musculus (Mouse).